Consider the following 355-residue polypeptide: Alanine racemase (355 aa).

The active-site Proton acceptor; specific for D-alanine is the K34. At K34 the chain carries N6-(pyridoxal phosphate)lysine. R133 is a substrate binding site. Y249 serves as the catalytic Proton acceptor; specific for L-alanine. M297 is a binding site for substrate.

Belongs to the alanine racemase family. Pyridoxal 5'-phosphate is required as a cofactor.

It carries out the reaction L-alanine = D-alanine. The protein operates within amino-acid biosynthesis; D-alanine biosynthesis; D-alanine from L-alanine: step 1/1. Functionally, catalyzes the interconversion of L-alanine and D-alanine. May also act on other amino acids. This is Alanine racemase (alr) from Rickettsia akari (strain Hartford).